Reading from the N-terminus, the 365-residue chain is Peptide chain release factor 2 (365 aa).

Position 251 is an N5-methylglutamine (glutamine 251).

It belongs to the prokaryotic/mitochondrial release factor family. In terms of processing, methylated by PrmC. Methylation increases the termination efficiency of RF2.

It localises to the cytoplasm. Its function is as follows. Peptide chain release factor 2 directs the termination of translation in response to the peptide chain termination codons UGA and UAA. The chain is Peptide chain release factor 2 from Campylobacter jejuni subsp. jejuni serotype O:2 (strain ATCC 700819 / NCTC 11168).